The primary structure comprises 310 residues: Ribosomal RNA small subunit methyltransferase H (310 aa).

S-adenosyl-L-methionine is bound by residues 47 to 49, Asp66, Phe93, Asp108, and Gln115; that span reads GGH.

The protein belongs to the methyltransferase superfamily. RsmH family.

The protein localises to the cytoplasm. The catalysed reaction is cytidine(1402) in 16S rRNA + S-adenosyl-L-methionine = N(4)-methylcytidine(1402) in 16S rRNA + S-adenosyl-L-homocysteine + H(+). Specifically methylates the N4 position of cytidine in position 1402 (C1402) of 16S rRNA. The chain is Ribosomal RNA small subunit methyltransferase H from Prochlorococcus marinus (strain MIT 9303).